The following is a 299-amino-acid chain: Protease HtpX homolog (299 aa).

2 helical membrane passes run 5 to 25 (IFLFILTNILVITTIGIVLSV) and 44 to 64 (MVALLVFSAVVGFVGSFMSLA). Residue histidine 155 coordinates Zn(2+). Glutamate 156 is a catalytic residue. Histidine 159 contributes to the Zn(2+) binding site. A run of 2 helical transmembrane segments spans residues 170–190 (LLQGIVNTFVVFLSRIAAWIA) and 205–225 (FIAVIVFQIIFSVLGSLVVFA). Glutamate 231 contributes to the Zn(2+) binding site.

Belongs to the peptidase M48B family. Requires Zn(2+) as cofactor.

Its subcellular location is the cell membrane. This chain is Protease HtpX homolog, found in Bacillus pumilus (strain SAFR-032).